A 102-amino-acid chain; its full sequence is Large ribosomal subunit protein eL30 (102 aa).

The protein belongs to the eukaryotic ribosomal protein eL30 family. In terms of assembly, part of the 50S ribosomal subunit.

This Thermococcus kodakarensis (strain ATCC BAA-918 / JCM 12380 / KOD1) (Pyrococcus kodakaraensis (strain KOD1)) protein is Large ribosomal subunit protein eL30.